The chain runs to 339 residues: MQLSGYPMRQASCDMKEGGLRNKVAVIGSGSWGTAIANLLCKAGNETILWGRDENVIDEINNARVNSKYLPGVELFLRATCDLDYAVADASHVYIALPSFALSKVLPKLSLDKFSIVISLIKCLEPDTGRRMSEVISEALDLGHNRLAVISGPNLALEVANDEPSVSVVASANIATANIVAGTLKCPGFYCIPSSDIKGVEICAASKNLVALISGIARGMDLGDNTRAALITLGFRELLRLVLENGGTEETVFGVAGLGDVVATCNSHLSRNNKAGVLLAKGAPLDEVKQTAEGVVAISGVLALAERSGVYMPIAQALSQVISGKRTAHSLLDICFSLA.

NADPH is bound by residues Ser31, Trp32, Arg52, and Lys122. The sn-glycerol 3-phosphate site is built by Lys122 and Gly152. Position 156 (Ala156) interacts with NADPH. Residues Lys207, Asp260, Ser270, Arg271, and Asn272 each contribute to the sn-glycerol 3-phosphate site. The active-site Proton acceptor is the Lys207. Arg271 serves as a coordination point for NADPH. Residue Glu293 participates in NADPH binding.

This sequence belongs to the NAD-dependent glycerol-3-phosphate dehydrogenase family.

It is found in the cytoplasm. It carries out the reaction sn-glycerol 3-phosphate + NAD(+) = dihydroxyacetone phosphate + NADH + H(+). It catalyses the reaction sn-glycerol 3-phosphate + NADP(+) = dihydroxyacetone phosphate + NADPH + H(+). Its pathway is membrane lipid metabolism; glycerophospholipid metabolism. In terms of biological role, catalyzes the reduction of the glycolytic intermediate dihydroxyacetone phosphate (DHAP) to sn-glycerol 3-phosphate (G3P), the key precursor for phospholipid synthesis. In Tropheryma whipplei (strain Twist) (Whipple's bacillus), this protein is Glycerol-3-phosphate dehydrogenase [NAD(P)+].